A 242-amino-acid chain; its full sequence is Demethylmenaquinone methyltransferase (242 aa).

S-adenosyl-L-methionine-binding residues include threonine 74 and aspartate 93.

Belongs to the class I-like SAM-binding methyltransferase superfamily. MenG/UbiE family.

It carries out the reaction a 2-demethylmenaquinol + S-adenosyl-L-methionine = a menaquinol + S-adenosyl-L-homocysteine + H(+). It participates in quinol/quinone metabolism; menaquinone biosynthesis; menaquinol from 1,4-dihydroxy-2-naphthoate: step 2/2. In terms of biological role, methyltransferase required for the conversion of demethylmenaquinol (DMKH2) to menaquinol (MKH2). The protein is Demethylmenaquinone methyltransferase of Chlorobaculum tepidum (strain ATCC 49652 / DSM 12025 / NBRC 103806 / TLS) (Chlorobium tepidum).